The following is a 461-amino-acid chain: Fumarate hydratase class II (461 aa).

Substrate contacts are provided by residues 97-99 (SGT), 127-130 (HPND), 137-139 (SSN), and T185. The active-site Proton donor/acceptor is the H186. The active site involves S316. Residues S317 and 322–324 (KVN) contribute to the substrate site.

It belongs to the class-II fumarase/aspartase family. Fumarase subfamily. Homotetramer.

The protein resides in the cytoplasm. The catalysed reaction is (S)-malate = fumarate + H2O. The protein operates within carbohydrate metabolism; tricarboxylic acid cycle; (S)-malate from fumarate: step 1/1. Its function is as follows. Involved in the TCA cycle. Catalyzes the stereospecific interconversion of fumarate to L-malate. This Staphylococcus haemolyticus (strain JCSC1435) protein is Fumarate hydratase class II.